A 154-amino-acid polypeptide reads, in one-letter code: Aspartate carbamoyltransferase regulatory chain (154 aa).

4 residues coordinate Zn(2+): C109, C114, C138, and C141.

The protein belongs to the PyrI family. In terms of assembly, contains catalytic and regulatory chains. It depends on Zn(2+) as a cofactor.

Its function is as follows. Involved in allosteric regulation of aspartate carbamoyltransferase. The polypeptide is Aspartate carbamoyltransferase regulatory chain (Photorhabdus laumondii subsp. laumondii (strain DSM 15139 / CIP 105565 / TT01) (Photorhabdus luminescens subsp. laumondii)).